The following is a 144-amino-acid chain: Large ribosomal subunit protein uL11 (144 aa).

The protein belongs to the universal ribosomal protein uL11 family. In terms of assembly, part of the ribosomal stalk of the 50S ribosomal subunit. Interacts with L10 and the large rRNA to form the base of the stalk. L10 forms an elongated spine to which L12 dimers bind in a sequential fashion forming a multimeric L10(L12)X complex. Post-translationally, one or more lysine residues are methylated.

Forms part of the ribosomal stalk which helps the ribosome interact with GTP-bound translation factors. The chain is Large ribosomal subunit protein uL11 from Polaromonas sp. (strain JS666 / ATCC BAA-500).